Reading from the N-terminus, the 321-residue chain is Ribosomal RNA small subunit methyltransferase H (321 aa).

Residues 40-42, Asp60, Phe84, Asp106, and Gln113 each bind S-adenosyl-L-methionine; that span reads GGH.

This sequence belongs to the methyltransferase superfamily. RsmH family.

The protein localises to the cytoplasm. The catalysed reaction is cytidine(1402) in 16S rRNA + S-adenosyl-L-methionine = N(4)-methylcytidine(1402) in 16S rRNA + S-adenosyl-L-homocysteine + H(+). Its function is as follows. Specifically methylates the N4 position of cytidine in position 1402 (C1402) of 16S rRNA. This chain is Ribosomal RNA small subunit methyltransferase H, found in Histophilus somni (strain 2336) (Haemophilus somnus).